The following is a 490-amino-acid chain: ATP synthase subunit beta, chloroplastic (490 aa).

G170–T177 contributes to the ATP binding site.

Belongs to the ATPase alpha/beta chains family. In terms of assembly, F-type ATPases have 2 components, CF(1) - the catalytic core - and CF(0) - the membrane proton channel. CF(1) has five subunits: alpha(3), beta(3), gamma(1), delta(1), epsilon(1). CF(0) has four main subunits: a(1), b(1), b'(1) and c(9-12).

The protein resides in the plastid. The protein localises to the chloroplast thylakoid membrane. It catalyses the reaction ATP + H2O + 4 H(+)(in) = ADP + phosphate + 5 H(+)(out). Its function is as follows. Produces ATP from ADP in the presence of a proton gradient across the membrane. The catalytic sites are hosted primarily by the beta subunits. In Pinus koraiensis (Korean pine), this protein is ATP synthase subunit beta, chloroplastic.